Here is a 645-residue protein sequence, read N- to C-terminus: uncharacterized protein (645 aa).

An N-terminal signal peptide occupies residues 1–23 (MPSSHRLSATILIFLSLTYISSS). Disordered stretches follow at residues 30–58 (ITDK…TTAS) and 92–129 (NSNA…AGIP). A compositionally biased stretch (polar residues) spans 92–102 (NSNANPYFSTT). N-linked (GlcNAc...) asparagine glycosylation is present at asparagine 107. Residues 107-119 (NRSDSSQKARDPD) show a composition bias toward basic and acidic residues. In terms of domain architecture, PAN 1 spans 135–214 (CFRRYENSII…QTRDYFEPTD (80 aa)). Cystine bridges form between cysteine 161-cysteine 187 and cysteine 165-cysteine 175. The interval 225-247 (ESSSSAPSSEDEDSPPSPPPSAP) is disordered. 2 PAN domains span residues 281 to 369 (CPRG…EKIC) and 378 to 465 (CPST…EVEC). Cystine bridges form between cysteine 281–cysteine 369, cysteine 313–cysteine 341, cysteine 317–cysteine 329, cysteine 378–cysteine 465, cysteine 407–cysteine 436, and cysteine 411–cysteine 422. N-linked (GlcNAc...) asparagine glycosylation occurs at asparagine 421. Residues 556–567 (AGELENNDHEQI) show a composition bias toward basic and acidic residues. The interval 556-582 (AGELENNDHEQIEDNNTDASEDPVPTK) is disordered. N-linked (GlcNAc...) asparagine glycosylation is present at asparagine 570.

This is an uncharacterized protein from Caenorhabditis elegans.